Consider the following 240-residue polypeptide: Small ribosomal subunit protein uS3 (240 aa).

One can recognise a KH type-2 domain in the interval 39-107 (IRDFIKKEAK…ELHLNIVEVR (69 aa)). Basic and acidic residues-rich tracts occupy residues 212–221 (PQARDRRATE) and 231–240 (PRRDRDRDAR). The segment at 212–240 (PQARDRRATEAQDGPSPRGPRRDRDRDAR) is disordered.

This sequence belongs to the universal ribosomal protein uS3 family. As to quaternary structure, part of the 30S ribosomal subunit. Forms a tight complex with proteins S10 and S14.

Binds the lower part of the 30S subunit head. Binds mRNA in the 70S ribosome, positioning it for translation. In Paracoccus denitrificans (strain Pd 1222), this protein is Small ribosomal subunit protein uS3.